The primary structure comprises 128 residues: Fluoride-specific ion channel FluC (128 aa).

4 helical membrane passes run 4-24 (LLLV…VGVQ), 37-57 (TFIV…WLAL), 72-92 (VGVM…ALMI), and 101-121 (FTYT…GLLI). Na(+) is bound by residues G76 and T79.

This sequence belongs to the fluoride channel Fluc/FEX (TC 1.A.43) family.

It is found in the cell inner membrane. The enzyme catalyses fluoride(in) = fluoride(out). With respect to regulation, na(+) is not transported, but it plays an essential structural role and its presence is essential for fluoride channel function. Its function is as follows. Fluoride-specific ion channel. Important for reducing fluoride concentration in the cell, thus reducing its toxicity. The polypeptide is Fluoride-specific ion channel FluC (Caulobacter sp. (strain K31)).